Reading from the N-terminus, the 189-residue chain is MTEYKLVVVGAGGVGKSALTIQLIQNHFVDEYDPTIEDSYRKQVVIDGETCLLDILDTAGQEEYSAMRDQYMRTGEGLLCVFAINNSKSFADINLYREQIKRVKDSDDVPMVLVGNKCDLPTRTVDTKQAHELAKSYGIPFIETSAKTRQGVEDAFYTLVREIRQYRMKKLNSSDDGTQGCMGLPCVVM.

Residues Gly10–Ala18 and Val29–Asp30 contribute to the GTP site. The Effector region motif lies at Tyr32 to Tyr40. Residue Asp57–Gln61 coordinates GTP. Phosphoserine is present on Ser89. Asn116 to Asp119 is a binding site for GTP. Residues Tyr166–Pro185 form a hypervariable region region. Residue Lys170 forms a Glycyl lysine isopeptide (Lys-Gly) (interchain with G-Cter in ubiquitin) linkage. Cys181 carries S-palmitoyl cysteine lipidation. Cys186 carries S-farnesyl cysteine lipidation. Positions Val187–Met189 are cleaved as a propeptide — removed in mature form.

Belongs to the small GTPase superfamily. Ras family. Interacts (active GTP-bound form preferentially) with RGS14. Interacts (active GTP-bound form) with RASSF7. Interacts (active GTP-bound form) with both SHOC2 and PP1c (all isoforms) to form a tertiary complex; SHOC2 and PP1c preferably bind M-Ras/MRAS, but they also bind K-Ras/KRAS, N-Ras/NRAS and H-Ras/HRAS. Post-translationally, palmitoylated by the ZDHHC9-GOLGA7 complex. Depalmitoylated by ABHD17A, ABHD17B and ABHD17C. A continuous cycle of de- and re-palmitoylation regulates rapid exchange between plasma membrane and Golgi. Acetylation at Lys-104 prevents interaction with guanine nucleotide exchange factors (GEFs). In terms of processing, ubiquitinated by the BCR(LZTR1) E3 ubiquitin ligase complex at Lys-170 in a non-degradative manner, leading to inhibit Ras signaling by decreasing Ras association with membranes. Post-translationally, phosphorylation at Ser-89 enhances NRAS association with its downstream effectors.

It is found in the cell membrane. Its subcellular location is the golgi apparatus membrane. It carries out the reaction GTP + H2O = GDP + phosphate + H(+). With respect to regulation, alternates between an inactive form bound to GDP and an active form bound to GTP. Activated by a guanine nucleotide-exchange factor (GEF) and inactivated by a GTPase-activating protein (GAP). Ras proteins bind GDP/GTP and possess intrinsic GTPase activity. This Pongo abelii (Sumatran orangutan) protein is GTPase NRas (NRAS).